Consider the following 413-residue polypeptide: von Willebrand factor A domain-containing protein 1 (413 aa).

Residues 1–20 form the signal peptide; it reads MLPWTVIGLALSLRLARSGA. Residues 32–211 form the VWFA domain; sequence DLLFLLDSSA…ALRGSILDAM (180 aa). Phosphoserine occurs at positions 72, 78, and 91. Fibronectin type-III domains are found at residues 212–302 and 305–395; these read WPQQ…TLPE and GPEL…TPEG. N262 carries an N-linked (GlcNAc...) asparagine glycan. The segment at 385–413 is disordered; that stretch reads ALSAKACTPEGERSRAPRPQPQRTGGREP.

As to quaternary structure, homodimer or homomultimer; disulfide-linked. Interacts with HSPG2. In terms of processing, N-glycosylated.

It localises to the secreted. Its subcellular location is the extracellular space. The protein resides in the extracellular matrix. It is found in the basement membrane. In terms of biological role, promotes matrix assembly. Involved in the organization of skeletal muscles and in the formation of neuromuscular junctions. The protein is von Willebrand factor A domain-containing protein 1 (VWA1) of Bos taurus (Bovine).